The chain runs to 148 residues: Cofilin/actin-depolymerizing factor homolog (148 aa).

One can recognise an ADF-H domain in the interval 4 to 143; the sequence is GVTVSDVCKT…SREAVEEKLR (140 aa). The short motif at 19 to 23 is the Nuclear localization signal element; the sequence is KKDKK.

It belongs to the actin-binding proteins ADF family. Post-translationally, phosphorylated in vitro by protein kinase LIMK1. Phosphorylation is required for inactivation of tsr and for cell proliferation and axon growth. Phosphorylation is negatively regulated by the panthothenate kinase fbl which catalyzes the first step in the conversion of panthothenic acid to coenzyme A. Dephosphorylated by protein phosphatase ssh which activates tsr.

The protein localises to the cytoplasm. It localises to the cytoskeleton. It is found in the nucleus matrix. Functionally, exhibits F-actin depolymerizing activity and regulates actin cytoskeleton dynamics. Required for cytokinesis in both mitotic and meiotic cells and for aster migration and separation. Promotes cell motility during ovary development and oogenesis. During larval development, required for the cell rearrangement needed for formation of terminal filaments which are stacks of somatic cells that are important for the initiation of ovarioles. Also required for border cell migration during oogenesis. During border cell migration, required for actin turnover and lamellipodial protrusion. Required for the establishment of planar cell polarity (PCP) where cells adopt a uniform orientation within the plane of an epithelium. During establishment of PCP, required for the redistribution of the PCP core proteins fz and stan/fmi to the proximodistal cell boundary. During pupal development, required for elongation of the retinal cell body and for rhabdomere morphogenesis. Required for mushroom body neuroblast proliferation and axon growth. Plays a role in the positive regulation of protein secretion. Plays a role in the regulation of nuclear localization of actin. Required for the maintenance of epithelial integrity by controlling cell junctions and is also necessary for cell survival and tissue growth through regulation of JNK and yki signaling. This Drosophila melanogaster (Fruit fly) protein is Cofilin/actin-depolymerizing factor homolog.